The sequence spans 39 residues: Omega-theraphotoxin-Bs1b (39 aa).

Cystine bridges form between Cys-4–Cys-25, Cys-8–Cys-31, and Cys-17–Cys-36.

The protein belongs to the neurotoxin 12 (Hwtx-2) family. 06 (TXP1) subfamily. In terms of tissue distribution, expressed by the venom gland.

The protein resides in the secreted. Its function is as follows. Inhibits voltage-gated calcium channels (Cav) in rat cerebellar granule cells. Has insecticidal activity. This is Omega-theraphotoxin-Bs1b from Brachypelma smithi (Mexican red knee tarantula).